The chain runs to 246 residues: Large ribosomal subunit protein uL30 (246 aa).

Met1 carries the post-translational modification N-acetylmethionine. 4 repeat units span residues 7 to 17 (KKVPSVPESLL), 18 to 28 (KRRQAYAAAKA), 29 to 40 (KRLKRLLAQKKF), and 41 to 52 (RKAQRKIIYERA). A 4 X 12 AA tandem repeats region spans residues 7–52 (KKVPSVPESLLKRRQAYAAAKAKRLKRLLAQKKFRKAQRKIIYERA).

This sequence belongs to the universal ribosomal protein uL30 family. As to quaternary structure, component of the large ribosomal subunit.

The protein resides in the cytoplasm. In terms of biological role, component of the large ribosomal subunit. The ribosome is a large ribonucleoprotein complex responsible for the synthesis of proteins in the cell. Binds to G-rich structures in 28S rRNA and in mRNAs. Plays a regulatory role in the translation apparatus; inhibits cell-free translation of mRNAs. This chain is Large ribosomal subunit protein uL30 (RPL7), found in Gallus gallus (Chicken).